A 298-amino-acid chain; its full sequence is Cation-efflux pump FieF (298 aa).

Residues 24 to 44 form a helical membrane-spanning segment; that stretch reads LLIKIFAWWYTGSVSILAALV. Asp-45 and Asp-49 together coordinate Zn(2+). 2 helical membrane passes run 80–100 and 112–132; these read SLAA…LTSI and PGVG…LVTF. 2 residues coordinate Zn(2+): His-151 and Asp-155. The next 2 helical transmembrane spans lie at 154-174 and 176-196; these read SDVM…YGWH and ADAL…LRMG.

This sequence belongs to the cation diffusion facilitator (CDF) transporter (TC 2.A.4) family. FieF subfamily. As to quaternary structure, homodimer.

It localises to the cell inner membrane. It catalyses the reaction Zn(2+)(in) + H(+)(out) = Zn(2+)(out) + H(+)(in). It carries out the reaction Cd(2+)(in) + H(+)(out) = Cd(2+)(out) + H(+)(in). The enzyme catalyses Fe(2+)(in) + H(+)(out) = Fe(2+)(out) + H(+)(in). Its function is as follows. Divalent metal cation transporter which exports Zn(2+), Cd(2+) and possibly Fe(2+). May be involved in zinc and iron detoxification by efflux. The sequence is that of Cation-efflux pump FieF from Salmonella typhi.